The primary structure comprises 434 residues: Nicotinate phosphoribosyltransferase (434 aa).

At His-242 the chain carries Phosphohistidine; by autocatalysis.

This sequence belongs to the NAPRTase family. Transiently phosphorylated on a His residue during the reaction cycle. Phosphorylation strongly increases the affinity for substrates and increases the rate of nicotinate D-ribonucleotide production. Dephosphorylation regenerates the low-affinity form of the enzyme, leading to product release.

The catalysed reaction is nicotinate + 5-phospho-alpha-D-ribose 1-diphosphate + ATP + H2O = nicotinate beta-D-ribonucleotide + ADP + phosphate + diphosphate. It participates in cofactor biosynthesis; NAD(+) biosynthesis; nicotinate D-ribonucleotide from nicotinate: step 1/1. In terms of biological role, catalyzes the synthesis of beta-nicotinate D-ribonucleotide from nicotinate and 5-phospho-D-ribose 1-phosphate at the expense of ATP. This chain is Nicotinate phosphoribosyltransferase, found in Rhizobium rhizogenes (strain K84 / ATCC BAA-868) (Agrobacterium radiobacter).